Consider the following 242-residue polypeptide: Sugar fermentation stimulation protein homolog (242 aa).

Belongs to the SfsA family.

The chain is Sugar fermentation stimulation protein homolog from Enterococcus mundtii.